The sequence spans 144 residues: Large ribosomal subunit protein uL15 (144 aa).

Residues 1 to 59 (MRLNTISPAEGSKPTGKRSGRGIGSGLGKTGGVGHKGQKSRSGGRVKPGFEGGQMPIQR) are disordered. Residues 21-35 (RGIGSGLGKTGGVGH) show a composition bias toward gly residues.

It belongs to the universal ribosomal protein uL15 family. In terms of assembly, part of the 50S ribosomal subunit.

Binds to the 23S rRNA. The polypeptide is Large ribosomal subunit protein uL15 (Alteromonas mediterranea (strain DSM 17117 / CIP 110805 / LMG 28347 / Deep ecotype)).